A 670-amino-acid chain; its full sequence is Alpha-1,4-glucan:maltose-1-phosphate maltosyltransferase (670 aa).

3 residues coordinate alpha-maltose 1-phosphate: Lys262, Gln322, and Asp357. Asp393 acts as the Nucleophile in catalysis. Position 394 (Asn394) interacts with alpha-maltose 1-phosphate. Residue Glu422 is the Proton donor of the active site. Alpha-maltose 1-phosphate is bound at residue 534–535 (KY).

It belongs to the glycosyl hydrolase 13 family. GlgE subfamily. As to quaternary structure, homodimer.

It carries out the reaction alpha-maltose 1-phosphate + [(1-&gt;4)-alpha-D-glucosyl](n) = [(1-&gt;4)-alpha-D-glucosyl](n+2) + phosphate. Maltosyltransferase that uses maltose 1-phosphate (M1P) as the sugar donor to elongate linear or branched alpha-(1-&gt;4)-glucans. Is involved in a branched alpha-glucan biosynthetic pathway from trehalose, together with TreS, Mak and GlgB. This Chlorobaculum tepidum (strain ATCC 49652 / DSM 12025 / NBRC 103806 / TLS) (Chlorobium tepidum) protein is Alpha-1,4-glucan:maltose-1-phosphate maltosyltransferase.